The chain runs to 401 residues: Ribosomal RNA dihydrouridine synthase (401 aa).

9 residues coordinate FAD: A15, D34, N35, R41, G47, N52, V132, E371, and F384.

It belongs to the BaiN/RdsA family. RdsA subfamily. It depends on FAD as a cofactor.

It catalyses the reaction a 5,6-dihydrouridine in mRNA + NAD(+) = a uridine in mRNA + NADH + H(+). In terms of biological role, catalyzes the synthesis of 5,6-dihydrouridine (D) at position 2449 in 23S rRNA. The sequence is that of Ribosomal RNA dihydrouridine synthase from Haemophilus influenzae (strain ATCC 51907 / DSM 11121 / KW20 / Rd).